Here is a 426-residue protein sequence, read N- to C-terminus: D-tagatose-1,6-bisphosphate aldolase subunit KbaZ (426 aa).

The protein belongs to the GatZ/KbaZ family. KbaZ subfamily. As to quaternary structure, forms a complex with KbaY.

The protein operates within carbohydrate metabolism; D-tagatose 6-phosphate degradation; D-glyceraldehyde 3-phosphate and glycerone phosphate from D-tagatose 6-phosphate: step 2/2. Its function is as follows. Component of the tagatose-1,6-bisphosphate aldolase KbaYZ that is required for full activity and stability of the Y subunit. Could have a chaperone-like function for the proper and stable folding of KbaY. When expressed alone, KbaZ does not show any aldolase activity. This Escherichia coli (strain K12 / MC4100 / BW2952) protein is D-tagatose-1,6-bisphosphate aldolase subunit KbaZ.